A 171-amino-acid polypeptide reads, in one-letter code: Methylated-DNA--protein-cysteine methyltransferase (171 aa).

The Nucleophile; methyl group acceptor role is filled by Cys139.

It belongs to the MGMT family.

Its subcellular location is the cytoplasm. It catalyses the reaction a 6-O-methyl-2'-deoxyguanosine in DNA + L-cysteinyl-[protein] = S-methyl-L-cysteinyl-[protein] + a 2'-deoxyguanosine in DNA. It carries out the reaction a 4-O-methyl-thymidine in DNA + L-cysteinyl-[protein] = a thymidine in DNA + S-methyl-L-cysteinyl-[protein]. Its function is as follows. Involved in the cellular defense against the biological effects of O6-methylguanine (O6-MeG) and O4-methylthymine (O4-MeT) in DNA. Repairs the methylated nucleobase in DNA by stoichiometrically transferring the methyl group to a cysteine residue in the enzyme. This is a suicide reaction: the enzyme is irreversibly inactivated. The sequence is that of Methylated-DNA--protein-cysteine methyltransferase from Salmonella typhi.